Consider the following 298-residue polypeptide: MESQKEARILQEPVARPPGASRSQTPNAKERQEGGPVPAAAALGAEADDDSADRLWELPVEPAKRRPECSRCSRPQKVCLCPFLPAHPLHISTHLYIIQHPAEENKVLRTVPLLAACLPQDKCKVKIGRRFSEERDPELSTVCRKSGTLILYPGAEAANLEEFILDSPVYPSTIIIIDGTWSQAKDIFYKNSLFRHPKQVQLKTSISSQYVIRMQPTNRCLSTLECAAVALSILEKNNYIQETLLRPLQALCSFQLQHGAQIRLSKEHLLKNGLYTKPMPKNKRKLRKMELLMNSVKI.

M1 carries the post-translational modification N-acetylmethionine. A disordered region spans residues 1–52; sequence MESQKEARILQEPVARPPGASRSQTPNAKERQEGGPVPAAAALGAEADDDSA. At S132 the chain carries Phosphoserine. The DXTW signature appears at 178–181; that stretch reads DGTW.

It belongs to the TDD superfamily. DTWD2 family.

It is found in the nucleus. Its subcellular location is the cytoplasm. The catalysed reaction is a uridine in tRNA + S-adenosyl-L-methionine = a 3-[(3S)-3-amino-3-carboxypropyl]uridine in tRNA + S-methyl-5'-thioadenosine + H(+). Its function is as follows. Catalyzes the formation of 3-(3-amino-3-carboxypropyl)uridine (acp3U) at position 20a in the D-loop of several cytoplasmic tRNAs (acp3U(20a)). Also has a weak activity to form acp3U at position 20 in the D-loop of tRNAs (acp3U(20)). Involved in glycoRNA biosynthesis by mediating formation of acp3U, which acts as an attachment site for N-glycans on tRNAs. GlycoRNAs consist of RNAs modified with secretory N-glycans that are presented on the cell surface. This Macaca fascicularis (Crab-eating macaque) protein is tRNA-uridine aminocarboxypropyltransferase 2.